The sequence spans 778 residues: Ribonucleoside-diphosphate reductase large subunit (778 aa).

Substrate-binding positions include Ser177, 192-193 (SC), Gly221, 419-423 (NLCIE), and 613-617 (PTATS). Cysteines 193 and 439 form a disulfide. Asn419 acts as the Proton acceptor in catalysis. Cys421 serves as the catalytic Cysteine radical intermediate. Glu423 serves as the catalytic Proton acceptor.

Belongs to the ribonucleoside diphosphate reductase large chain family. As to quaternary structure, heterotetramer composed of a homodimer of the large subunit (R1) and a homodimer of the small subunit (R2). Larger multisubunit protein complex are also active, composed of (R1)n(R2)n.

It carries out the reaction a 2'-deoxyribonucleoside 5'-diphosphate + [thioredoxin]-disulfide + H2O = a ribonucleoside 5'-diphosphate + [thioredoxin]-dithiol. Under complex allosteric control mediated by deoxynucleoside triphosphates and ATP binding. The type of nucleotide bound at the specificity site determines substrate preference. It seems probable that ATP makes the enzyme reduce CDP and UDP, dGTP favors ADP reduction and dTTP favors GDP reduction. Ribonucleoside-diphosphate reductase holoenzyme provides the precursors necessary for viral DNA synthesis. Allows virus growth in non-dividing cells. Catalyzes the biosynthesis of deoxyribonucleotides from the corresponding ribonucleotides. The protein is Ribonucleoside-diphosphate reductase large subunit of African swine fever virus (isolate Tick/South Africa/Pretoriuskop Pr4/1996) (ASFV).